Here is a 175-residue protein sequence, read N- to C-terminus: MAEQDWIIIGQVVAAQGLKGEVRINPSTDFPERFEVPGQRWLQLPNQDPQSVELERGRQIPGKNLFVVKFEHIQDRTQAENIRGAKVLVRAGDRPELEADEYHVSDLIGLEVFDYNTQAKLGIVSDLYTAAQDVLEVTDANQKKHLVPFVKAIVPVVDLVENRLEVDAPPGLFEI.

Residues 99-172 form the PRC barrel domain; sequence ADEYHVSDLI…RLEVDAPPGL (74 aa).

This sequence belongs to the RimM family. Binds ribosomal protein uS19.

It is found in the cytoplasm. An accessory protein needed during the final step in the assembly of 30S ribosomal subunit, possibly for assembly of the head region. Essential for efficient processing of 16S rRNA. May be needed both before and after RbfA during the maturation of 16S rRNA. It has affinity for free ribosomal 30S subunits but not for 70S ribosomes. The sequence is that of Ribosome maturation factor RimM from Picosynechococcus sp. (strain ATCC 27264 / PCC 7002 / PR-6) (Agmenellum quadruplicatum).